Consider the following 199-residue polypeptide: Cilia- and flagella-associated protein 20 (199 aa).

The protein belongs to the CFAP20 family. In terms of tissue distribution, expressed in spermatocytes and chordotonal organs in sensory neurons of the antenna.

It is found in the nucleus. Its subcellular location is the nucleolus. It localises to the cell projection. The protein resides in the cilium. The protein localises to the cytoplasm. It is found in the cytoskeleton. Its subcellular location is the microtubule organizing center. It localises to the centrosome. The protein resides in the centriole. The protein localises to the flagellum. It is found in the cilium axoneme. Cilium- and flagellum-specific protein that plays a role in axonemal structure organization and motility. Microtubule inner protein (MIP) part of the dynein-decorated doublet microtubules (DMTs) in cilia axoneme, which is required for motile cilia beating. Involved in the regulation of the size and morphology of cilia. Required for sperm individualization, differentiation of the sperm flagellum and tubulin polyglycylation of axonemal microtubules. The sequence is that of Cilia- and flagella-associated protein 20 from Drosophila melanogaster (Fruit fly).